A 244-amino-acid chain; its full sequence is Tyrosine recombinase XerD-like (244 aa).

Residues 1–73 (MRDRISAFLE…ACNQFLYFLY (73 aa)) form the Core-binding (CB) domain. A Tyr recombinase domain is found at 90 to 244 (AEKKTEKPEI…KTVLTLEKYR (155 aa)). Active-site residues include Lys-150 and Arg-211. Catalysis depends on Tyr-243, which acts as the O-(3'-phospho-DNA)-tyrosine intermediate.

This sequence belongs to the 'phage' integrase family. XerD-like subfamily.

Its subcellular location is the cytoplasm. Functionally, putative tyrosine recombinase. Not involved in the cutting and rejoining of the recombining DNA molecules on dif(SL) site. This is Tyrosine recombinase XerD-like from Streptococcus pneumoniae serotype 2 (strain D39 / NCTC 7466).